The chain runs to 414 residues: Transmembrane protein 184A (414 aa).

The segment at 1 to 32 (MTDTPGLLGTPLAWTPPARPAGPQMERAGNGS) is disordered. A run of 7 helical transmembrane segments spans residues 48 to 68 (VSGVFVWAALVLTGHQIYLHL), 83 to 103 (LLFIVPVYAFDSWLSLLLLGG), 120 to 140 (FVIYSFLSLCFQYLGGESAIM), 177 to 197 (LQFCIVKPIMALVTIVLQAFG), 211 to 231 (LYITLVYNASVSLALYALFLF), 248 to 268 (FLTIKAVIFLSFWQGLLLAIL), and 290 to 310 (VAAGYQNFIICIEMLFASIAL). 2 disordered regions span residues 323-342 (TESSPAPSAPMQSISSGLKE) and 364-414 (YTQQ…AEEL). Positions 379-388 (SVPSPRTPTH) are enriched in polar residues.

The protein belongs to the TMEM184 family. Expressed in vascular cells (at protein level).

It localises to the cell membrane. The protein resides in the cytoplasm. Its subcellular location is the perinuclear region. It is found in the cytoplasmic vesicle membrane. The protein localises to the early endosome membrane. It localises to the endosome. The protein resides in the cytoplasmic vesicle. Its subcellular location is the secretory vesicle membrane. Functionally, acts as a heparin receptor in vascular cells. May be involved in vesicle transport in exocrine cells and Sertoli cells. The protein is Transmembrane protein 184A (TMEM184A) of Bos taurus (Bovine).